Consider the following 541-residue polypeptide: Membrane protein insertase YidC (541 aa).

Transmembrane regions (helical) follow at residues 6–26 (NILL…WQAD), 325–345 (LVVD…LLMF), 349–369 (FVGN…GLLF), 420–440 (GGCL…WVLL), 457–477 (LSVQ…MFVM), and 500–520 (VIFT…WLVG).

It belongs to the OXA1/ALB3/YidC family. Type 1 subfamily. As to quaternary structure, interacts with the Sec translocase complex via SecD. Specifically interacts with transmembrane segments of nascent integral membrane proteins during membrane integration.

Its subcellular location is the cell inner membrane. Required for the insertion and/or proper folding and/or complex formation of integral membrane proteins into the membrane. Involved in integration of membrane proteins that insert both dependently and independently of the Sec translocase complex, as well as at least some lipoproteins. Aids folding of multispanning membrane proteins. The protein is Membrane protein insertase YidC of Shewanella baltica (strain OS223).